The following is a 347-amino-acid chain: Protein RecA (347 aa).

65 to 72 (GPESSGKT) is an ATP binding site.

It belongs to the RecA family.

Its subcellular location is the cytoplasm. Its function is as follows. Can catalyze the hydrolysis of ATP in the presence of single-stranded DNA, the ATP-dependent uptake of single-stranded DNA by duplex DNA, and the ATP-dependent hybridization of homologous single-stranded DNAs. It interacts with LexA causing its activation and leading to its autocatalytic cleavage. In Marinobacter nauticus (strain ATCC 700491 / DSM 11845 / VT8) (Marinobacter aquaeolei), this protein is Protein RecA.